The chain runs to 694 residues: Transcriptional activator HAA1 (694 aa).

A DNA-binding region (copper-fist) is located at residues 1–40 (MVLINGIKYACERCIRGHRVTTCNHTDQPLMMIKPKGRPS). 4 residues coordinate Zn(2+): Cys-11, Cys-14, Cys-23, and His-25. Disordered stretches follow at residues 104-128 (QKRHLRKSPSSSQKKGRSISRSQPM) and 209-240 (FNFLTGNINETNQNHSNHQHSKSGNNWQDSSV). Residues 111–126 (SPSSSQKKGRSISRSQ) are compositionally biased toward polar residues. A phosphoserine mark is found at Ser-125, Ser-231, Ser-241, and Ser-291. Disordered stretches follow at residues 332 to 388 (FDIN…NGLF), 479 to 514 (EKERETERSPSSNYITDRPFTRKPRSSSIDVNHRYP), 566 to 588 (SSIHSVPQSINSPRMPKTGSRQD), and 650 to 677 (MISTPSGRNDLPDTSPMSSIQTASPPSQ). The segment covering 336-349 (DNCNRINSKSYSKT) has biased composition (polar residues). The span at 350–378 (NSMNGNGMNNSNNNNINSNGNDKNNNNSS) shows a compositional bias: low complexity. Polar residues-rich tracts occupy residues 566 to 577 (SSIHSVPQSINS) and 664 to 677 (SPMSSIQTASPPSQ).

Its subcellular location is the nucleus. Its function is as follows. Regulates the transcription of a set of genes, many of which encode membrane proteins. Among the genes regulated are YGR138C and YRO2. Does not seem to be dependent on copper. The sequence is that of Transcriptional activator HAA1 (HAA1) from Saccharomyces cerevisiae (strain ATCC 204508 / S288c) (Baker's yeast).